The following is a 296-amino-acid chain: Nucleotide-binding protein ABC3036 (296 aa).

13 to 20 (GMSGAGKS) contributes to the ATP binding site. 64-67 (DLRG) lines the GTP pocket.

It belongs to the RapZ-like family.

In terms of biological role, displays ATPase and GTPase activities. This Shouchella clausii (strain KSM-K16) (Alkalihalobacillus clausii) protein is Nucleotide-binding protein ABC3036.